The following is a 103-amino-acid chain: Large ribosomal subunit protein bL21 (103 aa).

This sequence belongs to the bacterial ribosomal protein bL21 family. As to quaternary structure, part of the 50S ribosomal subunit. Contacts protein L20.

Its function is as follows. This protein binds to 23S rRNA in the presence of protein L20. This Legionella pneumophila (strain Lens) protein is Large ribosomal subunit protein bL21.